Reading from the N-terminus, the 368-residue chain is Alanine racemase 3 (368 aa).

Lys-42 (proton acceptor; specific for D-alanine) is an active-site residue. Lys-42 carries the post-translational modification N6-(pyridoxal phosphate)lysine. Arg-141 is a substrate binding site. The Proton acceptor; specific for L-alanine role is filled by Tyr-262. Met-310 lines the substrate pocket.

It belongs to the alanine racemase family. Requires pyridoxal 5'-phosphate as cofactor.

The catalysed reaction is L-alanine = D-alanine. It participates in amino-acid biosynthesis; D-alanine biosynthesis; D-alanine from L-alanine: step 1/1. In terms of biological role, catalyzes the interconversion of L-alanine and D-alanine. May also act on other amino acids. The protein is Alanine racemase 3 (alr3) of Salmonella typhi.